The sequence spans 147 residues: UPF0178 protein VIBHAR_03247 (147 aa).

Belongs to the UPF0178 family.

The chain is UPF0178 protein VIBHAR_03247 from Vibrio campbellii (strain ATCC BAA-1116).